Reading from the N-terminus, the 172-residue chain is Putative phosphoesterase BCG9842_B4061 (172 aa).

Residue histidine 34 is the Proton donor of the active site. 2 short sequence motifs (HXTX) span residues 34–37 (HITL) and 115–118 (HLTI). The active-site Proton acceptor is histidine 115.

The protein belongs to the 2H phosphoesterase superfamily. YjcG family.

The protein is Putative phosphoesterase BCG9842_B4061 of Bacillus cereus (strain G9842).